The following is a 78-amino-acid chain: Large ribosomal subunit protein bL28 (78 aa).

Residues 1–23 (MSRVCQVTGKKPMVGNNRSHAKN) form a disordered region.

Belongs to the bacterial ribosomal protein bL28 family.

The protein is Large ribosomal subunit protein bL28 of Shewanella sediminis (strain HAW-EB3).